The primary structure comprises 573 residues: Urease subunit alpha (573 aa).

The Urease domain maps to 136 to 573 (GAIDCHVHLI…LPMAQRYFLF (438 aa)). Residues H141, H143, and K224 each contribute to the Ni(2+) site. An N6-carboxylysine modification is found at K224. H226 contributes to the substrate binding site. Ni(2+)-binding residues include H253 and H279. The active-site Proton donor is the H327. D367 serves as a coordination point for Ni(2+).

It belongs to the metallo-dependent hydrolases superfamily. Urease alpha subunit family. As to quaternary structure, heterotrimer of UreA (gamma), UreB (beta) and UreC (alpha) subunits. Three heterotrimers associate to form the active enzyme. It depends on Ni cation as a cofactor. In terms of processing, carboxylation allows a single lysine to coordinate two nickel ions.

It localises to the cytoplasm. The enzyme catalyses urea + 2 H2O + H(+) = hydrogencarbonate + 2 NH4(+). Its pathway is nitrogen metabolism; urea degradation; CO(2) and NH(3) from urea (urease route): step 1/1. The polypeptide is Urease subunit alpha (Mycobacterium sp. (strain JLS)).